We begin with the raw amino-acid sequence, 954 residues long: Glycine dehydrogenase (decarboxylating) (954 aa).

Lys706 is subject to N6-(pyridoxal phosphate)lysine.

This sequence belongs to the GcvP family. In terms of assembly, the glycine cleavage system is composed of four proteins: P, T, L and H. Requires pyridoxal 5'-phosphate as cofactor.

It carries out the reaction N(6)-[(R)-lipoyl]-L-lysyl-[glycine-cleavage complex H protein] + glycine + H(+) = N(6)-[(R)-S(8)-aminomethyldihydrolipoyl]-L-lysyl-[glycine-cleavage complex H protein] + CO2. The glycine cleavage system catalyzes the degradation of glycine. The P protein binds the alpha-amino group of glycine through its pyridoxal phosphate cofactor; CO(2) is released and the remaining methylamine moiety is then transferred to the lipoamide cofactor of the H protein. This Pseudomonas savastanoi pv. phaseolicola (strain 1448A / Race 6) (Pseudomonas syringae pv. phaseolicola (strain 1448A / Race 6)) protein is Glycine dehydrogenase (decarboxylating).